Reading from the N-terminus, the 81-residue chain is Adipogenin (81 aa).

Residues 16–36 (FLVFWLCLPVALLLFLLIIWL) form a helical membrane-spanning segment.

The protein belongs to the adipogenin family. Highly expressed in subcutaneous, perirenal and mesecentric adipose tissue.

The protein resides in the membrane. It localises to the nucleus. Its function is as follows. Plays a role in stimulating adipocyte differentiation and development. This Bos taurus (Bovine) protein is Adipogenin.